A 36-amino-acid polypeptide reads, in one-letter code: Asteropin-A (36 aa).

Disulfide bonds link cysteine 2-cysteine 18, cysteine 9-cysteine 25, and cysteine 17-cysteine 35.

Its function is as follows. Sialidase inhibitor. Competitively inhibits bacterial sialidases, but not viral sialidases. Does not inhibit glycosidases or proteases. Has no antitumor activity. In Asteropus simplex (Marine sponge), this protein is Asteropin-A.